The sequence spans 326 residues: Target of rapamycin complex subunit LST8 (326 aa).

M1 is modified (N-acetylmethionine). WD repeat units lie at residues 1 to 37, 40 to 80, 83 to 122, 126 to 165, and 168 to 207; these read MNTTPGTVGSDPVILATAGYDHTVRFWQAHSGICTRT, HQDS…PIIS, GVSKNIASVGFHEDGRWMYTGGEDCTARIWDLRSRNLQCQ, QVNAPINCVCLHPNQAELIVGDQSGAIHIWDLKTDHNEQL, and EPESSITSAHIDPDASYMAAVNSAGNCYVWNLTGGIGDDV. Phosphothreonine is present on T51. Residue K86 forms a Glycyl lysine isopeptide (Lys-Gly) (interchain with G-Cter in SUMO3) linkage. Glycyl lysine isopeptide (Lys-Gly) (interchain with G-Cter in SUMO3) cross-links involve residues K215, K245, and K261. The stretch at 218-257 is one WD 6 repeat; it reads AHTRYALQCRFSPDSTLLATCSADQTCKIWRTSNFSLMTE. A WD 7 repeat occupies 268 to 309; sequence SSRGWMWGCAFSGDSQYIVTASSDNLARLWCVETGEIKREYG. Residue K305 forms a Glycyl lysine isopeptide (Lys-Gly) (interchain with G-Cter in SUMO3); alternate linkage. Residues K305 and K313 each participate in a glycyl lysine isopeptide (Lys-Gly) (interchain with G-Cter in ubiquitin); alternate cross-link. A Glycyl lysine isopeptide (Lys-Gly) (interchain with G-Cter in SUMO1); alternate cross-link involves residue K313.

The protein belongs to the WD repeat LST8 family. Part of the mechanistic target of rapamycin complex 1 (mTORC1) which contains MTOR, MLST8 and RPTOR. mTORC1 associates with AKT1S1/PRAS40, which inhibits its activity. mTORC1 binds to and is inhibited by FKBP12-rapamycin. Within mTORC1, interacts directly with MTOR and RPTOR. Component of the mechanistic target of rapamycin complex 2 (mTORC2), consisting in two heterotretramers composed of MTOR, MLST8, RICTOR and MAPKAP1/SIN1. Contrary to mTORC1, mTORC2 does not bind to and is not sensitive to FKBP12-rapamycin. mTORC1 and mTORC2 associate with DEPTOR, which regulates their activity. Interacts with RHEB. Interacts with MEAK7. Interacts with SIK3. Interacts with SLC38A7; this interaction promotes the recruitment of mTORC1 to the lysosome and its subsequent activation. Post-translationally, phosphorylation at Thr-51 by CDK1 promotes ubiquitination by the SCF(FBXW7) complex, followed by degradation. In terms of processing, ubiquitination by the SCF(FBXW7) and SCF(FBXW11) complexes following phosphorylation at Thr-51 by CDK1, leads to its degradation by the proteasome. Ubiquitination at Lys-305 and Lys-313 by TRAF2 via 'Lys-63'-linked polyubiquitin chains inhibits formation of the mTORC2 complex, while promoting formation of the mTORC1 complex: ubiquitination disrupts the interaction between MLST8 and MAPKAP1/SIN1 to favor mTORC1 assembly. Deubiquitination at Lys-305 and Lys-313 by OTUD7B promotes MLST8 interaction with MAPKAP1/SIN1, facilitating mTORC2 assembly. Sumoylation with SUMO1, SUMO2 and SUMO3 promotes assembly of both mTORC1 and mTORC2 complexes.

The protein localises to the lysosome membrane. It is found in the cytoplasm. Functionally, subunit of both mTORC1 and mTORC2, which regulates cell growth and survival in response to nutrient and hormonal signals. mTORC1 is activated in response to growth factors or amino acids. In response to nutrients, mTORC1 is recruited to the lysosome membrane and promotes protein, lipid and nucleotide synthesis by phosphorylating several substrates, such as ribosomal protein S6 kinase (RPS6KB1 and RPS6KB2) and EIF4EBP1 (4E-BP1). In the same time, it inhibits catabolic pathways by phosphorylating the autophagy initiation components ULK1 and ATG13, as well as transcription factor TFEB, a master regulators of lysosomal biogenesis and autophagy. The mTORC1 complex is inhibited in response to starvation and amino acid depletion. Within mTORC1, MLST8 interacts directly with MTOR and enhances its kinase activity. In nutrient-poor conditions, stabilizes the MTOR-RPTOR interaction and favors RPTOR-mediated inhibition of MTOR activity. As part of the mTORC2 complex, transduces signals from growth factors to pathways involved in proliferation, cytoskeletal organization, lipogenesis and anabolic output. mTORC2 is also activated by growth factors, but seems to be nutrient-insensitive. In response to growth factors, mTORC2 phosphorylates and activates AGC protein kinase family members, including AKT (AKT1, AKT2 and AKT3), PKC (PRKCA, PRKCB and PRKCE) and SGK1. mTORC2 functions upstream of Rho GTPases to regulate the actin cytoskeleton, probably by activating one or more Rho-type guanine nucleotide exchange factors. mTORC2 promotes the serum-induced formation of stress-fibers or F-actin. mTORC2 plays a critical role in AKT1 activation by mediating phosphorylation of different sites depending on the context, such as 'Thr-450', 'Ser-473', 'Ser-477' or 'Thr-479', facilitating the phosphorylation of the activation loop of AKT1 on 'Thr-308' by PDPK1/PDK1 which is a prerequisite for full activation. mTORC2 regulates the phosphorylation of SGK1 at 'Ser-422'. mTORC2 also modulates the phosphorylation of PRKCA on 'Ser-657'. Within mTORC2, MLST8 acts as a bridge between MAPKAP1/SIN1 and MTOR. The polypeptide is Target of rapamycin complex subunit LST8 (Mus musculus (Mouse)).